The following is a 186-amino-acid chain: Ribosome-recycling factor (186 aa).

Belongs to the RRF family.

The protein resides in the cytoplasm. Functionally, responsible for the release of ribosomes from messenger RNA at the termination of protein biosynthesis. May increase the efficiency of translation by recycling ribosomes from one round of translation to another. The chain is Ribosome-recycling factor from Ralstonia nicotianae (strain ATCC BAA-1114 / GMI1000) (Ralstonia solanacearum).